We begin with the raw amino-acid sequence, 60 residues long: Large ribosomal subunit protein uL30 (60 aa).

This sequence belongs to the universal ribosomal protein uL30 family. As to quaternary structure, part of the 50S ribosomal subunit.

The chain is Large ribosomal subunit protein uL30 from Amoebophilus asiaticus (strain 5a2).